The chain runs to 380 residues: Lipid-A-disaccharide synthase (380 aa).

The protein belongs to the LpxB family.

It catalyses the reaction a lipid X + a UDP-2-N,3-O-bis[(3R)-3-hydroxyacyl]-alpha-D-glucosamine = a lipid A disaccharide + UDP + H(+). It participates in bacterial outer membrane biogenesis; LPS lipid A biosynthesis. Its function is as follows. Condensation of UDP-2,3-diacylglucosamine and 2,3-diacylglucosamine-1-phosphate to form lipid A disaccharide, a precursor of lipid A, a phosphorylated glycolipid that anchors the lipopolysaccharide to the outer membrane of the cell. The protein is Lipid-A-disaccharide synthase of Pseudomonas syringae pv. tomato (strain ATCC BAA-871 / DC3000).